The chain runs to 764 residues: 5-methyltetrahydropteroyltriglutamate--homocysteine methyltransferase (764 aa).

5-methyltetrahydropteroyltri-L-glutamate is bound by residues 16–19 (RELK) and K115. L-homocysteine is bound by residues 435-437 (IGS) and E488. Residues 435–437 (IGS) and E488 each bind L-methionine. Residues 519–520 (RC) and W565 contribute to the 5-methyltetrahydropteroyltri-L-glutamate site. D603 is an L-homocysteine binding site. Position 603 (D603) interacts with L-methionine. Residue E609 coordinates 5-methyltetrahydropteroyltri-L-glutamate. Residues H645, C647, and E669 each contribute to the Zn(2+) site. H698 acts as the Proton donor in catalysis. C730 serves as a coordination point for Zn(2+).

The protein belongs to the vitamin-B12 independent methionine synthase family. Zn(2+) is required as a cofactor.

It catalyses the reaction 5-methyltetrahydropteroyltri-L-glutamate + L-homocysteine = tetrahydropteroyltri-L-glutamate + L-methionine. The protein operates within amino-acid biosynthesis; L-methionine biosynthesis via de novo pathway; L-methionine from L-homocysteine (MetE route): step 1/1. Functionally, catalyzes the transfer of a methyl group from 5-methyltetrahydrofolate to homocysteine resulting in methionine formation. In Burkholderia pseudomallei (strain 668), this protein is 5-methyltetrahydropteroyltriglutamate--homocysteine methyltransferase.